The following is a 192-amino-acid chain: Virion infectivity factor (192 aa).

Residues 14-17 (DRMR) are interaction with host APOBEC3F; F1-box. Residues 40 to 44 (YRHHF) form an interaction with host APOBEC3G; G-box region. Residues 54–72 (EVHIPLETAELVITTYWGL) form an interaction with host APOBEC3F and APOBEC3G; FG-box region. The tract at residues 74 to 79 (PGEREW) is interaction with host APOBEC3F; F2-box. An RNA-binding region spans residues 75–114 (GEREWHLGQGVSIEWRQGRYRTQIDPGLADQLIHIYYFDC). T96 carries the phosphothreonine; by host MAP4K1 modification. H108, C114, C133, and H139 together coordinate Zn(2+). Positions 108–139 (HIYYFDCFSESAIRKAILGHKISPRCNYQAGH) match the HCCH motif motif. Position 144 is a phosphoserine; by host (S144). A BC-box-like motif motif is present at residues 144–153 (SLQYLALTAL). Positions 151 to 164 (TALIAPKKTKPPLP) are multimerization. The interval 151–180 (TALIAPKKTKPPLPSVQKLVEDRWNKPQKT) is SOCS box-like. The tract at residues 164 to 192 (PSVQKLVEDRWNKPQKTRGHRESHTMNGH) is disordered. At S165 the chain carries Phosphoserine; by host MAP4K1. The tract at residues 171 to 172 (ED) is membrane association. The span at 183–192 (HRESHTMNGH) shows a compositional bias: basic and acidic residues. T188 carries the post-translational modification Phosphothreonine; by host.

This sequence belongs to the primate lentivirus group Vif protein family. As to quaternary structure, homomultimer; in vitro and presumably in vivo. Interacts with viral RNA and Pr55Gag precursor; these interactions mediate Vif incorporation into the virion. Interacts with the viral reverse transcriptase. Forms cullin-5-RING E3 ubiquitin-protein ligase complex (ECS complex) by interacting with host CUL5, RBX2, elongin BC complex (ELOB and ELOC) and CBFB/CBF-beta. Within the ECS complex, Vif interacts directly with host CUL5, ELOC and APOBEC (APOBEC3F and APOBEC3G) substrates. The ECS complex also contains some single-stranded RNA (ssRNA) that acts as a glue that bridges Vif with APOBEC (APOBEC3F and APOBEC3G) substrates. Interacts with host UBCE7IP1 isoform 3/ZIN and possibly with SAT. Interacts with host tyrosine kinases HCK and FYN; these interactions may decrease level of phosphorylated APOBEC3G incorporation into virions. Interacts with host ABCE1; this interaction may play a role in protecting viral RNA from damage during viral assembly. Interacts with host MDM2; this interaction targets Vif for degradation by the proteasome. Processed in virion by the viral protease. Post-translationally, highly phosphorylated on serine and threonine residues. In terms of processing, polyubiquitinated and degraded by the proteasome in the presence of APOBEC3G.

It localises to the host cytoplasm. The protein localises to the host cell membrane. The protein resides in the virion. In terms of biological role, counteracts the innate antiviral activity of host APOBEC3F and APOBEC3G by promoting their ubiquitination and degradation. Acts as a substrate recognition component of an E3 ubiquitin-protein ligase complex: mechanistically, Vif hijacks a host cullin-5-RING E3 ubiquitin-protein ligase complex (ECS complex) and the transcription coactivator CBFB/CBF-beta to form an active E3 ubiquitin-protein ligase complex that targets APOBEC3G and APOBEC3F for polyubiquitination, leading to their degradation by the proteasome. Vif interaction with APOBEC3G also blocks its cytidine deaminase activity in a proteasome-independent manner, suggesting a dual inhibitory mechanism. May interact directly with APOBEC3G mRNA in order to inhibit its translation. Association with CBFB/CBF-beta also inhibits the transcription coactivator activity of CBFB/CBF-beta. Seems to play a role in viral morphology by affecting the stability of the viral nucleoprotein core. Finally, Vif also contributes to the G2 cell cycle arrest observed in HIV infected cells. The chain is Virion infectivity factor from Homo sapiens (Human).